Here is a 520-residue protein sequence, read N- to C-terminus: GMP synthase [glutamine-hydrolyzing] (520 aa).

The Glutamine amidotransferase type-1 domain maps to 9 to 202 (TILIIDFGSQ…VHRIVGVKPG (194 aa)). Catalysis depends on cysteine 86, which acts as the Nucleophile. Catalysis depends on residues histidine 176 and glutamate 178. In terms of domain architecture, GMPS ATP-PPase spans 203–395 (WTMGAYREQA…LGLPDSFIGR (193 aa)). 230–236 (SGGVDSS) is a binding site for ATP.

Homodimer.

It catalyses the reaction XMP + L-glutamine + ATP + H2O = GMP + L-glutamate + AMP + diphosphate + 2 H(+). It participates in purine metabolism; GMP biosynthesis; GMP from XMP (L-Gln route): step 1/1. Functionally, catalyzes the synthesis of GMP from XMP. The sequence is that of GMP synthase [glutamine-hydrolyzing] from Brucella ovis (strain ATCC 25840 / 63/290 / NCTC 10512).